The chain runs to 42 residues: YKQCHKKGGHCFPKEKICIPPSSDFGKMDCRWRWKCCKKGSG.

Cystine bridges form between C4-C36, C11-C30, and C18-C37.

Belongs to the crotamine-myotoxin family. Monomer. As to expression, expressed by the venom gland.

It is found in the secreted. Its function is as follows. Cationic peptide that possesses multiple functions. It acts as a cell-penetrating peptide (CPP), and as a potent voltage-gated potassium channel (Kv) inhibitor, it induces severe muscle necrosis by a non-enzymatic mechanism and exhibits antimicrobial activities. It also elicits a short-lasting hyperextension of the hind limb. It does not cause observable tissue damage (whereas the whole venom causes severe myonecrosis accompanied by edema and hemorrhage). The polypeptide is Crotamine Ile-19 (Crotalus durissus ruruima (South American rattlesnake)).